The sequence spans 248 residues: MHKKKHIKHGTNKQEIINIGTKSPTFQEKQRPSKTDQRSTVWREEQKKQELKVHRIFHPQPRTGFDVGKGIDPWLTTWQMITVILATLCIILVTKVGFLIPSLFSKGEKQSRKFSLLDPLCDRNDDSSCDFCSSDWIAFGNNFYCVFRENSKTWVESQSACEELNSHLVIIDSKAEVENLLLFEMDGWILHRMDGTNSSRLWGNDIKIRNTLMNDSEKKNHSCHYLRGNIFMPDECSAKKTYICEFNI.

The Cytoplasmic portion of the chain corresponds to 1–79 (MHKKKHIKHG…GIDPWLTTWQ (79 aa)). Residues 19–44 (IGTKSPTFQEKQRPSKTDQRSTVWRE) are disordered. Residues 28–44 (EKQRPSKTDQRSTVWRE) are compositionally biased toward basic and acidic residues. A helical; Signal-anchor for type II membrane protein membrane pass occupies residues 80-100 (MITVILATLCIILVTKVGFLI). Topologically, residues 101-248 (PSLFSKGEKQ…KKTYICEFNI (148 aa)) are extracellular. Intrachain disulfides connect Cys-132/Cys-145, Cys-161/Cys-244, and Cys-223/Cys-236. Residues 139 to 245 (FGNNFYCVFR…CSAKKTYICE (107 aa)) enclose the C-type lectin domain. Residues Asn-197, Asn-214, and Asn-220 are each glycosylated (N-linked (GlcNAc...) asparagine).

Heterodimer with KLRE1. In terms of tissue distribution, expressed in natural killer (NK) cells.

The protein localises to the cell membrane. Lectin-like receptor for natural killer (NK) cells. Heterodimer formation with KLRE1 mediates NK cell cytolytic activity. This Mus musculus (Mouse) protein is Killer cell lectin-like receptor subfamily I member 2.